The chain runs to 270 residues: Ribonuclease HII (270 aa).

Positions 28–222 constitute an RNase H type-2 domain; sequence RQVAGADEAG…VSGRQGAPPR (195 aa). A divalent metal cation contacts are provided by D34, E35, and D128.

It belongs to the RNase HII family. It depends on Mn(2+) as a cofactor. The cofactor is Mg(2+).

The protein resides in the cytoplasm. It catalyses the reaction Endonucleolytic cleavage to 5'-phosphomonoester.. In terms of biological role, endonuclease that specifically degrades the RNA of RNA-DNA hybrids. This Salinispora tropica (strain ATCC BAA-916 / DSM 44818 / JCM 13857 / NBRC 105044 / CNB-440) protein is Ribonuclease HII.